A 240-amino-acid chain; its full sequence is Probable transcriptional regulatory protein Hac_0344 (240 aa).

It belongs to the TACO1 family.

It localises to the cytoplasm. In Helicobacter acinonychis (strain Sheeba), this protein is Probable transcriptional regulatory protein Hac_0344.